The primary structure comprises 325 residues: Beta-ketoacyl-[acyl-carrier-protein] synthase III (325 aa).

Residues Cys-119 and His-252 contribute to the active site. The ACP-binding stretch occupies residues 253–257 (QANIR). The active site involves Asn-282.

This sequence belongs to the thiolase-like superfamily. FabH family. As to quaternary structure, homodimer.

It is found in the cytoplasm. The catalysed reaction is malonyl-[ACP] + acetyl-CoA + H(+) = 3-oxobutanoyl-[ACP] + CO2 + CoA. It participates in lipid metabolism; fatty acid biosynthesis. Its function is as follows. Catalyzes the condensation reaction of fatty acid synthesis by the addition to an acyl acceptor of two carbons from malonyl-ACP. Catalyzes the first condensation reaction which initiates fatty acid synthesis and may therefore play a role in governing the total rate of fatty acid production. Possesses both acetoacetyl-ACP synthase and acetyl transacylase activities. Its substrate specificity determines the biosynthesis of branched-chain and/or straight-chain of fatty acids. This chain is Beta-ketoacyl-[acyl-carrier-protein] synthase III, found in Variovorax paradoxus (strain S110).